A 588-amino-acid polypeptide reads, in one-letter code: Adenine deaminase (588 aa).

This sequence belongs to the metallo-dependent hydrolases superfamily. Adenine deaminase family. Homodimer. Mn(2+) serves as cofactor.

The catalysed reaction is adenine + H2O + H(+) = hypoxanthine + NH4(+). The polypeptide is Adenine deaminase (Shigella sonnei (strain Ss046)).